Here is a 273-residue protein sequence, read N- to C-terminus: Citrate lyase subunit beta-like protein (273 aa).

The substrate site is built by arginine 64 and glutamate 112. Residues glutamate 112 and aspartate 138 each coordinate Mg(2+).

This sequence belongs to the HpcH/HpaI aldolase family. Citrate lyase beta subunit-like subfamily. In terms of assembly, homotrimer. The cofactor is Mg(2+).

May play a role in fatty acid biosynthesis. This Mycobacterium tuberculosis (strain CDC 1551 / Oshkosh) protein is Citrate lyase subunit beta-like protein (citE).